The primary structure comprises 274 residues: 2,3,4,5-tetrahydropyridine-2,6-dicarboxylate N-succinyltransferase (274 aa).

Residues Arg106 and Asp143 each coordinate substrate.

The protein belongs to the transferase hexapeptide repeat family. As to quaternary structure, homotrimer.

It is found in the cytoplasm. The catalysed reaction is (S)-2,3,4,5-tetrahydrodipicolinate + succinyl-CoA + H2O = (S)-2-succinylamino-6-oxoheptanedioate + CoA. It functions in the pathway amino-acid biosynthesis; L-lysine biosynthesis via DAP pathway; LL-2,6-diaminopimelate from (S)-tetrahydrodipicolinate (succinylase route): step 1/3. This is 2,3,4,5-tetrahydropyridine-2,6-dicarboxylate N-succinyltransferase from Rickettsia akari (strain Hartford).